We begin with the raw amino-acid sequence, 232 residues long: Small ribosomal subunit protein uS3 (232 aa).

The 69-residue stretch at 39–107 (VRQFLTKELA…PAQINIAEVR (69 aa)) folds into the KH type-2 domain.

Belongs to the universal ribosomal protein uS3 family. In terms of assembly, part of the 30S ribosomal subunit. Forms a tight complex with proteins S10 and S14.

Functionally, binds the lower part of the 30S subunit head. Binds mRNA in the 70S ribosome, positioning it for translation. The protein is Small ribosomal subunit protein uS3 of Yersinia pseudotuberculosis serotype O:1b (strain IP 31758).